A 172-amino-acid chain; its full sequence is dCTP deaminase, dUMP-forming (172 aa).

Residues Arg-93–Arg-98, Asp-111, Thr-119–Glu-121, Gln-138, and Tyr-151 each bind dCTP. Glu-121 functions as the Proton donor/acceptor in the catalytic mechanism.

Belongs to the dCTP deaminase family. Homotrimer.

It catalyses the reaction dCTP + 2 H2O = dUMP + NH4(+) + diphosphate. The protein operates within pyrimidine metabolism; dUMP biosynthesis; dUMP from dCTP: step 1/1. Functionally, bifunctional enzyme that catalyzes both the deamination of dCTP to dUTP and the hydrolysis of dUTP to dUMP without releasing the toxic dUTP intermediate. The sequence is that of dCTP deaminase, dUMP-forming from Hathewaya histolytica (Clostridium histolyticum).